Here is a 439-residue protein sequence, read N- to C-terminus: Amino-acid acetyltransferase (439 aa).

Residues 289 to 429 (EDIRIATVQD…DHYNYQRRSK (141 aa)) form the N-acetyltransferase domain.

Belongs to the acetyltransferase family. ArgA subfamily.

It is found in the cytoplasm. The catalysed reaction is L-glutamate + acetyl-CoA = N-acetyl-L-glutamate + CoA + H(+). The protein operates within amino-acid biosynthesis; L-arginine biosynthesis; N(2)-acetyl-L-ornithine from L-glutamate: step 1/4. This chain is Amino-acid acetyltransferase, found in Mannheimia succiniciproducens (strain KCTC 0769BP / MBEL55E).